The chain runs to 146 residues: Ribonuclease P protein component (146 aa).

The protein belongs to the RnpA family. As to quaternary structure, consists of a catalytic RNA component (M1 or rnpB) and a protein subunit.

It carries out the reaction Endonucleolytic cleavage of RNA, removing 5'-extranucleotides from tRNA precursor.. RNaseP catalyzes the removal of the 5'-leader sequence from pre-tRNA to produce the mature 5'-terminus. It can also cleave other RNA substrates such as 4.5S RNA. The protein component plays an auxiliary but essential role in vivo by binding to the 5'-leader sequence and broadening the substrate specificity of the ribozyme. The protein is Ribonuclease P protein component of Helicobacter hepaticus (strain ATCC 51449 / 3B1).